The chain runs to 401 residues: Imidazolonepropionase (401 aa).

His70 and His72 together coordinate Fe(3+). Zn(2+)-binding residues include His70 and His72. The 4-imidazolone-5-propanoate site is built by Arg79, Tyr142, and His175. Tyr142 contacts N-formimidoyl-L-glutamate. Position 238 (His238) interacts with Fe(3+). Position 238 (His238) interacts with Zn(2+). Gln241 provides a ligand contact to 4-imidazolone-5-propanoate. Asp313 contributes to the Fe(3+) binding site. Residue Asp313 coordinates Zn(2+). N-formimidoyl-L-glutamate contacts are provided by Asn315 and Gly317. Residue Thr318 participates in 4-imidazolone-5-propanoate binding.

This sequence belongs to the metallo-dependent hydrolases superfamily. HutI family. The cofactor is Zn(2+). Requires Fe(3+) as cofactor.

Its subcellular location is the cytoplasm. It carries out the reaction 4-imidazolone-5-propanoate + H2O = N-formimidoyl-L-glutamate. It participates in amino-acid degradation; L-histidine degradation into L-glutamate; N-formimidoyl-L-glutamate from L-histidine: step 3/3. Functionally, catalyzes the hydrolytic cleavage of the carbon-nitrogen bond in imidazolone-5-propanoate to yield N-formimidoyl-L-glutamate. It is the third step in the universal histidine degradation pathway. This is Imidazolonepropionase from Xanthomonas campestris pv. campestris (strain 8004).